We begin with the raw amino-acid sequence, 84 residues long: Delta-stichotoxin-Sgt3a (84 aa).

Residues 1–19 (MAYLKIVLVALMLVVAVSA) form the signal peptide. Residues 20–33 (MRLSDQEDQDISVA) constitute a propeptide that is removed on maturation. 3 disulfide bridges follow: Cys38/Cys78, Cys40/Cys68, and Cys61/Cys79. Gly84 is a propeptide.

Belongs to the sea anemone sodium channel inhibitory toxin family. Type II subfamily.

The protein localises to the secreted. It is found in the nematocyst. In terms of biological role, binds specifically to voltage-gated sodium channels (Nav), thereby delaying their inactivation during signal transduction. In Stichodactyla gigantea (Giant carpet anemone), this protein is Delta-stichotoxin-Sgt3a.